The following is a 105-amino-acid chain: dATP/dGTP diphosphohydrolase (105 aa).

It belongs to the Caudovirales dATP/dGTP diphosphohydrolase family. It depends on Co(2+) as a cofactor.

The catalysed reaction is dGTP + H2O = dGMP + diphosphate + H(+). The enzyme catalyses dATP + H2O = dAMP + diphosphate + H(+). It functions in the pathway purine metabolism. Catalyzes the hydrolysis of dGTP into dGMP, which is needed among other for the first step of biosynthesis of dZTP (2-amino-2'-deoxyadenosine-5'-triphosphate). In Cyanophage S-2L (Cyanobacteria phage S-2L), this protein is dATP/dGTP diphosphohydrolase.